The sequence spans 551 residues: MATLHAYFDPANYSLFFVLGVLTHVFIFRRGEWDLHVFNILQAFAVLESSLVYIVTRAVQAQGLSLWKVTTISSCFTLSTLMGLLISILMYRSWFHRLRRFPGPFCARLSNLYITFRAFKKNRLYEEVQQLHRRYGDIVRIGPNELSIIDPHALRALHSNSSPCTKGPWYSVEHPIKALQMTRDKEEHAYRRKAWDLAFSSKALREYEARVAGYTTQLVDQIEASQSTPIDASLWFNFYSFDVMGDLAFGRTFDMLKNGTAHPFMELVHSNMLTAGSLSHLPWIFPLLKRIPLLNQKTLEFQGWLKQQVDWRQKNNPDLPDVFSWILSDYDALDKPTAQDTINLRGDAQLIAVAGSDTTAASLSCLFSELAVNPETCLNLQRELDQYHAEHDKPDHLSLSKLRYLQACIDESMRLYPAIPSGLQRMTPPEGLDIGNTYLPGDTIVTIPTYTFNRDERLFTHADKFIPERWTTKKELTKDPSNFVPFSIGQYSCVGKQLGLMETRFVASQILVKYNVRLAHEDVARDFVAGLRDGFTLAMPSLSLVFTQRTT.

A run of 3 helical transmembrane segments spans residues Phe-8 to Phe-28, Leu-35 to Val-55, and Val-69 to Leu-89. Asn-258 carries an N-linked (GlcNAc...) asparagine glycan. Cys-493 serves as a coordination point for heme.

This sequence belongs to the cytochrome P450 family. Heme serves as cofactor.

It localises to the membrane. Its pathway is secondary metabolite biosynthesis. Functionally, cytochrome P450 monooxygenase; part of the gene cluster that mediates the biosynthesis of cytokinins such as fusatin, fusatinic acids or 8-oxofusatin, known for their growth promoting and anti-senescence activities toward host plants. FCK1 is a bifunctional enzyme that performs the first steps in the biosynthesis of Fusarium cytokinins. It first condenses adenosine monophosphate (AMP) with dimethylallyl diphosphate (DMAPP) to yield isoprenyl adenosine monophosphate. It then catalyzes the removal of the phosphoribose to produce isopentenylaldehyde. The cytochrome P450 monooxygenase then converts isopentenylaldehyde to trans-zeatin. A condensation step converts trans-zeatin to fusatin which is further modified to produce fusatinic acid. The mechanism for oxidation of fusatin to fusatinic acid remains unknown. 8-oxofusatin could be produced through several pathways, via direct oxygenation of fusatin, or via the 8-oxo-pentenyladenine intermediate which itself must arise from either the prenylation of 8-oxo-AMP by FCK1 and/or oxygenation of isopentenylaldehyde. Both the FCK3 and FCK4 enzymes act downstream of the identified cytokinins to produce yet unidentified compounds. This chain is Cytochrome P450 monooxygenase FCK2, found in Fusarium pseudograminearum (strain CS3096) (Wheat and barley crown-rot fungus).